Consider the following 131-residue polypeptide: Large ribosomal subunit protein eL14 (131 aa).

This sequence belongs to the eukaryotic ribosomal protein eL14 family. Component of the large ribosomal subunit. Mature ribosomes consist of a small (40S) and a large (60S) subunit. The 40S subunit contains about 32 different proteins and 1 molecule of RNA (18S). The 60S subunit contains 45 different proteins and 3 molecules of RNA (25S, 5.8S and 5S).

Its subcellular location is the cytoplasm. In terms of biological role, component of the ribosome, a large ribonucleoprotein complex responsible for the synthesis of proteins in the cell. The small ribosomal subunit (SSU) binds messenger RNAs (mRNAs) and translates the encoded message by selecting cognate aminoacyl-transfer RNA (tRNA) molecules. The large subunit (LSU) contains the ribosomal catalytic site termed the peptidyl transferase center (PTC), which catalyzes the formation of peptide bonds, thereby polymerizing the amino acids delivered by tRNAs into a polypeptide chain. The nascent polypeptides leave the ribosome through a tunnel in the LSU and interact with protein factors that function in enzymatic processing, targeting, and the membrane insertion of nascent chains at the exit of the ribosomal tunnel. This Candida albicans (strain SC5314 / ATCC MYA-2876) (Yeast) protein is Large ribosomal subunit protein eL14.